The following is a 117-amino-acid chain: MADQITSATASAMSVRMPARKVRMVIDLIRGKSVAEAIAILEFTPRAASPVVIKVLKSAIANAEHNYDLDAENLVVTKAYANEGPTLKRFRPRAKGSASPINKRTSHITVVVSEKEA.

The protein belongs to the universal ribosomal protein uL22 family. In terms of assembly, part of the 50S ribosomal subunit.

In terms of biological role, this protein binds specifically to 23S rRNA; its binding is stimulated by other ribosomal proteins, e.g. L4, L17, and L20. It is important during the early stages of 50S assembly. It makes multiple contacts with different domains of the 23S rRNA in the assembled 50S subunit and ribosome. Its function is as follows. The globular domain of the protein is located near the polypeptide exit tunnel on the outside of the subunit, while an extended beta-hairpin is found that lines the wall of the exit tunnel in the center of the 70S ribosome. The sequence is that of Large ribosomal subunit protein uL22 from Latilactobacillus sakei subsp. sakei (strain 23K) (Lactobacillus sakei subsp. sakei).